Here is a 311-residue protein sequence, read N- to C-terminus: Lipoyl synthase (311 aa).

Residues Cys-36, Cys-41, Cys-47, Cys-66, Cys-70, Cys-73, and Ser-280 each contribute to the [4Fe-4S] cluster site. The Radical SAM core domain maps to 51–269; it reads RDGPGTATFM…RVAESEFGFL (219 aa).

This sequence belongs to the radical SAM superfamily. Lipoyl synthase family. The cofactor is [4Fe-4S] cluster.

The protein resides in the cytoplasm. It carries out the reaction [[Fe-S] cluster scaffold protein carrying a second [4Fe-4S](2+) cluster] + N(6)-octanoyl-L-lysyl-[protein] + 2 oxidized [2Fe-2S]-[ferredoxin] + 2 S-adenosyl-L-methionine + 4 H(+) = [[Fe-S] cluster scaffold protein] + N(6)-[(R)-dihydrolipoyl]-L-lysyl-[protein] + 4 Fe(3+) + 2 hydrogen sulfide + 2 5'-deoxyadenosine + 2 L-methionine + 2 reduced [2Fe-2S]-[ferredoxin]. It functions in the pathway protein modification; protein lipoylation via endogenous pathway; protein N(6)-(lipoyl)lysine from octanoyl-[acyl-carrier-protein]: step 2/2. Functionally, catalyzes the radical-mediated insertion of two sulfur atoms into the C-6 and C-8 positions of the octanoyl moiety bound to the lipoyl domains of lipoate-dependent enzymes, thereby converting the octanoylated domains into lipoylated derivatives. The protein is Lipoyl synthase of Halobacterium salinarum (strain ATCC 29341 / DSM 671 / R1).